A 3390-amino-acid chain; its full sequence is Genome polyprotein (3390 aa).

Positions 1–15 (MNNQRKKTGKPSINM) are interaction with host EXOC1. Residues 1–100 (MNNQRKKTGK…MLSIINQRKK (100 aa)) lie on the Cytoplasmic side of the membrane. Residues 37–72 (LLNGQGPMKLVMAFIAFLRFLAIPPTAGVLARWGTF) form a hydrophobic; homodimerization of capsid protein C region. Residues 101–114 (TSLCLMMILPAALA) constitute a propeptide, ER anchor for the capsid protein C, removed in mature form by serine protease NS3. A helical membrane pass occupies residues 101-120 (TSLCLMMILPAALAFHLTSR). Topologically, residues 121 to 243 (DGEPRMIVGK…VEKVETWALR (123 aa)) are extracellular. N-linked (GlcNAc...) asparagine; by host glycosylation occurs at N183. The chain crosses the membrane as a helical span at residues 244–264 (HPGFTILALFLAHYIGTSLTQ). Position 265 (K265) is a topological domain, cytoplasmic. The helical transmembrane segment at 266 to 280 (VVIFILLMLVTPSMT) threads the bilayer. Over 281-723 (MRCVGVGNRD…VHQIFGSAYT (443 aa)) the chain is Extracellular. Disulfide bonds link C283–C310, C340–C401, C354–C385, and C372–C396. An N-linked (GlcNAc...) asparagine; by host glycan is attached at N347. The interval 378 to 391 (DRGWGNGCGLFGKG) is fusion peptide. Residue N433 is glycosylated (N-linked (GlcNAc...) asparagine; by host). 2 disulfides stabilise this stretch: C463-C563 and C580-C611. A helical transmembrane segment spans residues 724 to 744 (ALFSGVSWVMKIGIGVLLTWI). Over 745-750 (GLNSKN) the chain is Cytoplasmic. The chain crosses the membrane as a helical span at residues 751–771 (TSMSFSCIAIGIITLYLGAVV). Residues 772 to 1193 (QADMGCVINW…MIGSNASDRM (422 aa)) are Extracellular-facing. Disulfide bonds link C777-C788, C828-C916, C952-C996, C1053-C1102, C1064-C1086, and C1085-C1089. N-linked (GlcNAc...) asparagine; by host glycosylation is found at N903 and N980. Residues N1132 and N1188 are each glycosylated (N-linked (GlcNAc...) asparagine; by host). The helical transmembrane segment at 1194-1218 (GMGVTYLALIATFKIQPFLALGFFL) threads the bilayer. The Cytoplasmic portion of the chain corresponds to 1219 to 1224 (RKLTSR). Residues 1225–1243 (ENLLLGVGLAMATTLQLPE) traverse the membrane as a helical segment. The Lumenal segment spans residues 1244–1267 (DIEQMANGVALGLMALKLITQFET). The helical transmembrane segment at 1268 to 1288 (YQLWTALVSLTCSNTIFTLTV) threads the bilayer. Position 1289 (A1289) is a topological domain, cytoplasmic. A helical membrane pass occupies residues 1290-1308 (WRTATLILAGVSLLPVCQS). Residues 1309–1315 (SSMRKTD) are Lumenal-facing. A helical transmembrane segment spans residues 1316 to 1336 (WLPMTVAAMGVPPLPLFIFSL). Residues 1337–1344 (KDTLKRRS) lie on the Cytoplasmic side of the membrane. The helical transmembrane segment at 1345 to 1365 (WPLNEGVMAVGLVSILASSLL) threads the bilayer. At 1366-1368 (RND) the chain is on the lumenal side. A helical transmembrane segment spans residues 1369–1389 (VPMAGPLVAGGLLIACYVITG). At 1390 to 1443 (TSADLTVEKAPDVTWEEEAEQTGVSHNLMITVDDDGTMRIKDDETENILTVLLK) the chain is on the cytoplasmic side. The tract at residues 1396–1435 (VEKAPDVTWEEEAEQTGVSHNLMITVDDDGTMRIKDDETE) is interacts with and activates NS3 protease. An intramembrane region (helical) is located at residues 1444–1464 (TALLIVSGIFPYSIPATLLVW). The Cytoplasmic portion of the chain corresponds to 1465–2146 (HTWQKQTQRS…VEELPETMET (682 aa)). The 178-residue stretch at 1474-1651 (SGVLWDVPSP…NAEPDGPTPE (178 aa)) folds into the Peptidase S7 domain. Catalysis depends on charge relay system; for serine protease NS3 activity residues H1524, D1548, and S1608. A Helicase ATP-binding domain is found at 1654-1810 (EEMFKKRNLT…QSNAPIQDEE (157 aa)). Residues 1658 to 1661 (KKRN) are important for RNA-binding. 1667–1674 (LHPGSGKT) lines the ATP pocket. The short motif at 1758–1761 (DEAH) is the DEAH box element. The Helicase C-terminal domain occupies 1820-1986 (SGNEWITDFA…GIIPALFEPE (167 aa)). K1862 bears the N6-acetyllysine; by host mark. A helical transmembrane segment spans residues 2147–2167 (LLLLGLMILLTGGAMLFLISG). Residues 2168 to 2169 (KG) lie on the Lumenal side of the membrane. The helical intramembrane region spans 2170–2190 (IGKTSIGLICVIASSGMLWMA). Position 2191 (E2191) is a topological domain, lumenal. A helical membrane pass occupies residues 2192-2212 (VPLQWIASAIVLEFFMMVLLI). Over 2213–2227 (PEPEKQRTPQDNQLA) the chain is Cytoplasmic. A helical transmembrane segment spans residues 2228 to 2248 (YVVIGILTLAATIAANEMGLL). Over 2249-2273 (ETTKRDLGMSKEPGVVSPTSYLDVD) the chain is Lumenal. An intramembrane region (helical) is located at residues 2274–2294 (LHPASAWTLYAVATTVITPML). The Lumenal portion of the chain corresponds to 2295–2305 (RHTIENSTANV). 2 N-linked (GlcNAc...) asparagine; by host glycosylation sites follow: N2300 and N2304. Residues 2306 to 2326 (SLAAIANQAVVLMGLDKGWPI) constitute an intramembrane region (helical). Topologically, residues 2327 to 2346 (SKMDLGVPLLALGCYSQVNP) are lumenal. The helical transmembrane segment at 2347 to 2367 (LTLTAAVLLLITHYAIIGPGL) threads the bilayer. Residues 2368–2412 (QAKATREAQKRTAAGIMKNPTVDGIMTIDLDSVIFDSKFEKQLGQ) lie on the Cytoplasmic side of the membrane. A helical transmembrane segment spans residues 2413–2433 (VMLLVLCAVQLLLMRTSWALC). At 2434–2458 (EALTLATGPITTLWEGSPGKFWNTT) the chain is on the lumenal side. The N-linked (GlcNAc...) asparagine; by host glycan is linked to N2456. The helical transmembrane segment at 2459–2479 (IAVSMANIFRGSYLAGAGLAF) threads the bilayer. The Cytoplasmic segment spans residues 2480-3390 (SIMKSVGTGK…KEEESEGAIW (911 aa)). In terms of domain architecture, mRNA cap 0-1 NS5-type MT spans 2492–2753 (TGSQGETLGE…DVDLGAGTRH (262 aa)). S-adenosyl-L-methionine is bound at residue S2546. A Phosphoserine modification is found at S2546. Residue K2551 is the For 2'-O-MTase activity of the active site. Positions 2567–2570 (VIDL) match the SUMO-interacting motif motif. The S-adenosyl-L-methionine site is built by G2576, W2577, T2594, K2595, D2621, and V2622. The active-site For 2'-O-MTase activity is the D2636. Residue I2637 coordinates S-adenosyl-L-methionine. Catalysis depends on for 2'-O-MTase activity residues K2670 and E2706. S-adenosyl-L-methionine is bound at residue Y2708. Residues E2927, H2931, C2936, and C2939 each contribute to the Zn(2+) site. One can recognise a RdRp catalytic domain in the interval 3018–3168 (AMYADDTAGW…PIDDRFANAL (151 aa)). 3 residues coordinate Zn(2+): H3202, C3218, and C3337.

It in the N-terminal section; belongs to the class I-like SAM-binding methyltransferase superfamily. mRNA cap 0-1 NS5-type methyltransferase family. Homodimer. Interacts (via N-terminus) with host EXOC1 (via C-terminus); this interaction results in EXOC1 degradation through the proteasome degradation pathway. As to quaternary structure, forms heterodimers with envelope protein E in the endoplasmic reticulum and Golgi. In terms of assembly, homodimer; in the endoplasmic reticulum and Golgi. Interacts with protein prM. Interacts with non-structural protein 1. Homodimer; Homohexamer when secreted. Interacts with envelope protein E. As to quaternary structure, interacts (via N-terminus) with serine protease NS3. In terms of assembly, forms a heterodimer with serine protease NS3. May form homooligomers. Forms a heterodimer with NS2B. Interacts with NS4B. Interacts with unphosphorylated RNA-directed RNA polymerase NS5; this interaction stimulates RNA-directed RNA polymerase NS5 guanylyltransferase activity. Interacts with host SHFL. As to quaternary structure, interacts with host MAVS; this interaction inhibits the synthesis of IFN-beta. Interacts with host SHFL. Interacts with host AUP1; the interaction occurs in the presence of Dengue virus NS4B and induces lipophagy which facilitates production of virus progeny particles. In terms of assembly, interacts with serine protease NS3. Homodimer. Interacts with host STAT2; this interaction inhibits the phosphorylation of the latter, and, when all viral proteins are present (polyprotein), targets STAT2 for degradation. Interacts with serine protease NS3. Specific enzymatic cleavages in vivo yield mature proteins. Cleavages in the lumen of endoplasmic reticulum are performed by host signal peptidase, whereas cleavages in the cytoplasmic side are performed by serine protease NS3. Signal cleavage at the 2K-4B site requires a prior NS3 protease-mediated cleavage at the 4A-2K site. In terms of processing, cleaved in post-Golgi vesicles by a host furin, releasing the mature small envelope protein M, and peptide pr. This cleavage is incomplete as up to 30% of viral particles still carry uncleaved prM. Post-translationally, N-glycosylated. N-glycosylated. The excreted form is glycosylated and this is required for efficient secretion of the protein from infected cells. In terms of processing, acetylated by host KAT5. Acetylation modulates NS3 RNA-binding and unwinding activities and plays an important positive role for viral replication. Post-translationally, sumoylation of RNA-directed RNA polymerase NS5 increases NS5 protein stability allowing proper viral RNA replication. Phosphorylated on serines residues. This phosphorylation may trigger NS5 nuclear localization.

Its subcellular location is the virion. The protein resides in the host nucleus. The protein localises to the host cytoplasm. It localises to the host perinuclear region. It is found in the secreted. Its subcellular location is the virion membrane. The protein resides in the host endoplasmic reticulum membrane. The protein localises to the host mitochondrion. The catalysed reaction is Selective hydrolysis of -Xaa-Xaa-|-Yaa- bonds in which each of the Xaa can be either Arg or Lys and Yaa can be either Ser or Ala.. It catalyses the reaction RNA(n) + a ribonucleoside 5'-triphosphate = RNA(n+1) + diphosphate. The enzyme catalyses a ribonucleoside 5'-triphosphate + H2O = a ribonucleoside 5'-diphosphate + phosphate + H(+). It carries out the reaction ATP + H2O = ADP + phosphate + H(+). The catalysed reaction is a 5'-end (5'-triphosphoguanosine)-ribonucleoside in mRNA + S-adenosyl-L-methionine = a 5'-end (N(7)-methyl 5'-triphosphoguanosine)-ribonucleoside in mRNA + S-adenosyl-L-homocysteine. It catalyses the reaction a 5'-end (N(7)-methyl 5'-triphosphoguanosine)-ribonucleoside in mRNA + S-adenosyl-L-methionine = a 5'-end (N(7)-methyl 5'-triphosphoguanosine)-(2'-O-methyl-ribonucleoside) in mRNA + S-adenosyl-L-homocysteine + H(+). In terms of biological role, plays a role in virus budding by binding to the cell membrane and gathering the viral RNA into a nucleocapsid that forms the core of a mature virus particle. During virus entry, may induce genome penetration into the host cytoplasm after hemifusion induced by the surface proteins. Can migrate to the cell nucleus where it modulates host functions. Overcomes the anti-viral effects of host EXOC1 by sequestering and degrading the latter through the proteasome degradation pathway. Inhibits RNA silencing by interfering with host Dicer. Functionally, prevents premature fusion activity of envelope proteins in trans-Golgi by binding to envelope protein E at pH6.0. After virion release in extracellular space, gets dissociated from E dimers. Its function is as follows. Acts as a chaperone for envelope protein E during intracellular virion assembly by masking and inactivating envelope protein E fusion peptide. prM is the only viral peptide matured by host furin in the trans-Golgi network probably to avoid catastrophic activation of the viral fusion activity in acidic Golgi compartment prior to virion release. prM-E cleavage is inefficient, and many virions are only partially matured. These uncleaved prM would play a role in immune evasion. In terms of biological role, may play a role in virus budding. Exerts cytotoxic effects by activating a mitochondrial apoptotic pathway through M ectodomain. May display a viroporin activity. Binds to host cell surface receptor and mediates fusion between viral and cellular membranes. Envelope protein is synthesized in the endoplasmic reticulum in the form of heterodimer with protein prM. They play a role in virion budding in the ER, and the newly formed immature particle is covered with 60 spikes composed of heterodimer between precursor prM and envelope protein E. The virion is transported to the Golgi apparatus where the low pH causes dissociation of PrM-E heterodimers and formation of E homodimers. prM-E cleavage is inefficient, and many virions are only partially matured. These uncleaved prM would play a role in immune evasion. Functionally, involved in immune evasion, pathogenesis and viral replication. Once cleaved off the polyprotein, is targeted to three destinations: the viral replication cycle, the plasma membrane and the extracellular compartment. Essential for viral replication. Required for formation of the replication complex and recruitment of other non-structural proteins to the ER-derived membrane structures. Excreted as a hexameric lipoparticle that plays a role against host immune response. Antagonizing the complement function. Binds to the host macrophages and dendritic cells. Inhibits signal transduction originating from Toll-like receptor 3 (TLR3). Its function is as follows. Disrupts the host endothelial glycocalyx layer of host pulmonary microvascular endothelial cells, inducing degradation of sialic acid and shedding of heparan sulfate proteoglycans. NS1 induces expression of sialidases, heparanase, and activates cathepsin L, which activates heparanase via enzymatic cleavage. These effects are probably linked to the endothelial hyperpermeability observed in severe dengue disease. In terms of biological role, component of the viral RNA replication complex that functions in virion assembly and antagonizes the host immune response. Required cofactor for the serine protease function of NS3. May have membrane-destabilizing activity and form viroporins. Functionally, displays three enzymatic activities: serine protease, NTPase and RNA helicase. NS3 serine protease, in association with NS2B, performs its autocleavage and cleaves the polyprotein at dibasic sites in the cytoplasm: C-prM, NS2A-NS2B, NS2B-NS3, NS3-NS4A, NS4A-2K and NS4B-NS5. NS3 RNA helicase binds RNA and unwinds dsRNA in the 3' to 5' direction. Its function is as follows. Regulates the ATPase activity of the NS3 helicase activity. NS4A allows NS3 helicase to conserve energy during unwinding. Plays a role in the inhibition of the host innate immune response. Interacts with host MAVS and thereby prevents the interaction between RIGI and MAVS. In turn, IFN-beta production is impaired. Interacts with host AUP1 which mediates induction of lipophagy in host cells and facilitates production of virus progeny particles. In terms of biological role, functions as a signal peptide for NS4B and is required for the interferon antagonism activity of the latter. Induces the formation of ER-derived membrane vesicles where the viral replication takes place. Inhibits interferon (IFN)-induced host STAT1 phosphorylation and nuclear translocation, thereby preventing the establishment of cellular antiviral state by blocking the IFN-alpha/beta pathway. Functionally, replicates the viral (+) and (-) RNA genome, and performs the capping of genomes in the cytoplasm. NS5 methylates viral RNA cap at guanine N-7 and ribose 2'-O positions. Besides its role in RNA genome replication, also prevents the establishment of cellular antiviral state by blocking the interferon-alpha/beta (IFN-alpha/beta) signaling pathway. Inhibits host TYK2 and STAT2 phosphorylation, thereby preventing activation of JAK-STAT signaling pathway. This is Genome polyprotein (pol) from Dengue virus type 3 (strain Sri Lanka/1266/2000) (DENV-3).